We begin with the raw amino-acid sequence, 653 residues long: 2-oxoglutarate oxidoreductase subunit KorA (653 aa).

A disordered region spans residues 1 to 21 (MDPNGSGAGPESHDAAFHAAP). Over residues 11–21 (ESHDAAFHAAP) the composition is skewed to basic and acidic residues.

KG oxidoreductase (KOR) is composed of KorA and KorB subunits.

The enzyme catalyses 2 oxidized [2Fe-2S]-[ferredoxin] + 2-oxoglutarate + CoA = succinyl-CoA + 2 reduced [2Fe-2S]-[ferredoxin] + CO2 + H(+). The protein operates within carbohydrate metabolism; tricarboxylic acid cycle. Its function is as follows. Component of KG oxidoreductase (KOR) that catalyzes the CoA-dependent oxidative decarboxylation of 2-oxoglutarate (alpha-ketoglutarate, KG) to succinyl-CoA. Methyl viologen can act as electron acceptor in vitro; the physiologic electron acceptor is unknown. Is involved in the alternative TCA pathway that functions concurrently with fatty acid beta-oxidation. Since a growing body of evidence indicates that lipids (for example cholesterol and fatty acids) are a predominant growth substrate for M.tuberculosis during infection, flux through KOR likely represents an important step in intermediary metabolism in vivo. KOR-dependent decarboxylation of KG also appears to be an important source of CO(2) in M.tuberculosis metabolism. The protein is 2-oxoglutarate oxidoreductase subunit KorA (korA) of Mycobacterium tuberculosis (strain ATCC 25618 / H37Rv).